Reading from the N-terminus, the 423-residue chain is Gamma-glutamyl phosphate reductase (423 aa).

This sequence belongs to the gamma-glutamyl phosphate reductase family.

The protein localises to the cytoplasm. It catalyses the reaction L-glutamate 5-semialdehyde + phosphate + NADP(+) = L-glutamyl 5-phosphate + NADPH + H(+). Its pathway is amino-acid biosynthesis; L-proline biosynthesis; L-glutamate 5-semialdehyde from L-glutamate: step 2/2. Catalyzes the NADPH-dependent reduction of L-glutamate 5-phosphate into L-glutamate 5-semialdehyde and phosphate. The product spontaneously undergoes cyclization to form 1-pyrroline-5-carboxylate. This is Gamma-glutamyl phosphate reductase from Brucella suis (strain ATCC 23445 / NCTC 10510).